We begin with the raw amino-acid sequence, 355 residues long: Protein RecA (355 aa).

73–80 (GPESSGKT) contacts ATP.

The protein belongs to the RecA family.

It localises to the cytoplasm. Can catalyze the hydrolysis of ATP in the presence of single-stranded DNA, the ATP-dependent uptake of single-stranded DNA by duplex DNA, and the ATP-dependent hybridization of homologous single-stranded DNAs. It interacts with LexA causing its activation and leading to its autocatalytic cleavage. This Solidesulfovibrio magneticus (strain ATCC 700980 / DSM 13731 / RS-1) (Desulfovibrio magneticus) protein is Protein RecA.